The chain runs to 355 residues: Glycerol-3-phosphate dehydrogenase [NAD(P)+] (355 aa).

NADPH is bound by residues Ser14, Trp15, Arg35, and Lys117. Lys117, Gly147, and Ser149 together coordinate sn-glycerol 3-phosphate. An NADPH-binding site is contributed by Ala151. The sn-glycerol 3-phosphate site is built by Lys202, Asp255, Ser265, Arg266, and Asn267. Lys202 functions as the Proton acceptor in the catalytic mechanism. An NADPH-binding site is contributed by Arg266. Residues Ile290 and Glu292 each coordinate NADPH.

This sequence belongs to the NAD-dependent glycerol-3-phosphate dehydrogenase family.

The protein resides in the cytoplasm. The enzyme catalyses sn-glycerol 3-phosphate + NAD(+) = dihydroxyacetone phosphate + NADH + H(+). It catalyses the reaction sn-glycerol 3-phosphate + NADP(+) = dihydroxyacetone phosphate + NADPH + H(+). It functions in the pathway membrane lipid metabolism; glycerophospholipid metabolism. Functionally, catalyzes the reduction of the glycolytic intermediate dihydroxyacetone phosphate (DHAP) to sn-glycerol 3-phosphate (G3P), the key precursor for phospholipid synthesis. This is Glycerol-3-phosphate dehydrogenase [NAD(P)+] from Lawsonia intracellularis (strain PHE/MN1-00).